Here is a 210-residue protein sequence, read N- to C-terminus: Thymidylate kinase (210 aa).

10-17 is an ATP binding site; it reads GLEGAGKT.

This sequence belongs to the thymidylate kinase family.

It catalyses the reaction dTMP + ATP = dTDP + ADP. In terms of biological role, phosphorylation of dTMP to form dTDP in both de novo and salvage pathways of dTTP synthesis. This is Thymidylate kinase from Erwinia tasmaniensis (strain DSM 17950 / CFBP 7177 / CIP 109463 / NCPPB 4357 / Et1/99).